Here is a 362-residue protein sequence, read N- to C-terminus: Tyrosine-protein kinase SRK2 (362 aa).

Positions 1-70 (TFLVRESESK…GLCVNLRQPC (70 aa)) constitute an SH2 domain. The region spanning 95 to 348 (ITLIRKLGAG…ALQWRLEDFF (254 aa)) is the Protein kinase domain. ATP-binding positions include 101-109 (LGAGQFGEV) and Lys123. The Proton acceptor role is filled by Asp214.

Belongs to the protein kinase superfamily. Tyr protein kinase family.

The protein resides in the cytoplasm. It catalyses the reaction L-tyrosyl-[protein] + ATP = O-phospho-L-tyrosyl-[protein] + ADP + H(+). This is Tyrosine-protein kinase SRK2 (SRK2) from Spongilla lacustris (Freshwater sponge).